Here is a 529-residue protein sequence, read N- to C-terminus: Potassium voltage-gated channel subfamily A member 6 (529 aa).

A disordered region spans residues 1 to 35 (MRSEKSLTLAAPGEVRGPEGEQQDAGEFQEAEGGG). Over 1–171 (MRSEKSLTLA…LLFEYPESSG (171 aa)) the chain is Cytoplasmic. Serine 3 bears the Phosphoserine mark. Residues 21 to 30 (EQQDAGEFQE) are compositionally biased toward acidic residues. The helical transmembrane segment at 172 to 193 (PARGIAIVSVLVILISIVIFCL) threads the bilayer. At 194–262 (ETLPQFRADG…TLGGSFFTDP (69 aa)) the chain is on the extracellular side. The tract at residues 203–238 (GRGGSNEGSGTRLSPASRSHEEEDEDEDSYAFPGSI) is disordered. Residues 210–219 (GSGTRLSPAS) are compositionally biased toward polar residues. The chain crosses the membrane as a helical span at residues 263–284 (FFLVETLCIVWFTFELLVRFSA). Cysteine 285 carries the S-palmitoyl cysteine lipid modification. Over 285-295 (CPSKAAFFRNI) the chain is Cytoplasmic. A helical membrane pass occupies residues 296–316 (MNIIDLVAIFPYFITLGTELV). The Extracellular segment spans residues 317 to 337 (QRHEQQSVSGGSGQNGQQAMS). The chain crosses the membrane as a helical; Voltage-sensor span at residues 338 to 358 (LAILRVIRLVRVFRIFKLSRH). Residues 359–373 (SKGLQILGKTLQASM) are Cytoplasmic-facing. Residues 360–373 (KGLQILGKTLQASM) are S4-S5 linker. Residues 374–395 (RELGLLIFFLFIGVILFSSAVY) form a helical membrane-spanning segment. Residues 396 to 409 (FAEADDVDSLFPSI) are Extracellular-facing. An intramembrane region (helical) is located at residues 410–421 (PDAFWWAVVTMT). A Selectivity filter motif is present at residues 422–427 (TVGYGD). The stretch at 422–429 (TVGYGDMY) is an intramembrane region. The Extracellular segment spans residues 430 to 436 (PMTVGGK). Residues 437-465 (IVGSLCAIAGVLTIALPVPVIVSNFNYFY) traverse the membrane as a helical segment. Over 466–529 (HRETEQEEQG…YAEKRMLTEV (64 aa)) the chain is Cytoplasmic. The segment at 488–513 (DLKATDNGLGKPDFAEASRERRPSYL) is disordered. The span at 500–510 (DFAEASRERRP) shows a compositional bias: basic and acidic residues. The residue at position 511 (serine 511) is a Phosphoserine; by PKA. The PDZ-binding motif lies at 527–529 (TEV).

It belongs to the potassium channel family. A (Shaker) (TC 1.A.1.2) subfamily. Kv1.6/KCNA6 sub-subfamily. As to quaternary structure, homotetramer and heterotetramer of potassium channel proteins. Interacts with KCNAB1 and KCNAB2.

It is found in the cell membrane. The enzyme catalyses K(+)(in) = K(+)(out). Its function is as follows. Voltage-gated potassium channel that mediates transmembrane potassium transport in excitable membranes. Forms tetrameric potassium-selective channels through which potassium ions pass in accordance with their electrochemical gradient. The channel alternates between opened and closed conformations in response to the voltage difference across the membrane. Can form functional homotetrameric channels and heterotetrameric channels that contain variable proportions of KCNA1, KCNA2, KCNA4, KCNA6, and possibly other family members as well; channel properties depend on the type of alpha subunits that are part of the channel. Channel properties are modulated by cytoplasmic beta subunits that regulate the subcellular location of the alpha subunits and promote rapid inactivation. Homotetrameric channels display rapid activation and slow inactivation. The sequence is that of Potassium voltage-gated channel subfamily A member 6 (Kcna6) from Mus musculus (Mouse).